We begin with the raw amino-acid sequence, 95 residues long: Progonadoliberin-1 (95 aa).

A signal peptide spans M1 to C25. A Pyrrolidone carboxylic acid modification is found at Q26. G35 is subject to Glycine amide.

This sequence belongs to the GnRH family.

It localises to the secreted. In terms of biological role, stimulates the secretion of gonadotropins. This Sparus aurata (Gilthead sea bream) protein is Progonadoliberin-1 (gnrh1).